The sequence spans 283 residues: BTB/POZ domain-containing protein KCTD15 (283 aa).

A disordered region spans residues 1 to 32 (MPHRKERPSGSSLHTHGSTGTAEGGNMSRLSL). A compositionally biased stretch (low complexity) spans 9 to 21 (SGSSLHTHGSTGT). Residues Ser-31, Ser-35, and Ser-38 each carry the phosphoserine modification. In terms of domain architecture, BTB spans 56-126 (APVHIDVGGH…LRTSKLLLPD (71 aa)).

In terms of assembly, forms oligomers, predominantly homopentamers. Interacts with KCTD1, probably forming heteropentamers depending on its abundance in a cell-type dependent manner. Interacts with TFAP2A; this interaction inhibits TFAP2A transcriptional activation.

The protein localises to the nucleus. In terms of biological role, during embryonic development, it is involved in neural crest formation. Inhibits AP2 transcriptional activity by interaction with its activation domain. The polypeptide is BTB/POZ domain-containing protein KCTD15 (KCTD15) (Homo sapiens (Human)).